The chain runs to 308 residues: D-alanine--D-alanine ligase (308 aa).

The ATP-grasp domain maps to 105-302; that stretch reads KAIFRSLGLA…FPDLCDRILD (198 aa). 133–188 lines the ATP pocket; the sequence is DLPFGLPCVVKPAGEGSSVGVHLVNAAAELGPACRDAAGYAGDVIVERYVKGTEVD. Mg(2+) is bound by residues Asp256, Glu269, and Asn271.

This sequence belongs to the D-alanine--D-alanine ligase family. Mg(2+) serves as cofactor. Requires Mn(2+) as cofactor.

It is found in the cytoplasm. The enzyme catalyses 2 D-alanine + ATP = D-alanyl-D-alanine + ADP + phosphate + H(+). It participates in cell wall biogenesis; peptidoglycan biosynthesis. Its function is as follows. Cell wall formation. The chain is D-alanine--D-alanine ligase from Anaeromyxobacter dehalogenans (strain 2CP-C).